Here is a 409-residue protein sequence, read N- to C-terminus: NADH-quinone oxidoreductase subunit D (409 aa).

Belongs to the complex I 49 kDa subunit family. NDH-1 is composed of 14 different subunits. Subunits NuoB, C, D, E, F, and G constitute the peripheral sector of the complex.

The protein resides in the cell inner membrane. The enzyme catalyses a quinone + NADH + 5 H(+)(in) = a quinol + NAD(+) + 4 H(+)(out). In terms of biological role, NDH-1 shuttles electrons from NADH, via FMN and iron-sulfur (Fe-S) centers, to quinones in the respiratory chain. The immediate electron acceptor for the enzyme in this species is believed to be ubiquinone. Couples the redox reaction to proton translocation (for every two electrons transferred, four hydrogen ions are translocated across the cytoplasmic membrane), and thus conserves the redox energy in a proton gradient. The polypeptide is NADH-quinone oxidoreductase subunit D (nuoD) (Thermus thermophilus (strain ATCC BAA-163 / DSM 7039 / HB27)).